Here is a 444-residue protein sequence, read N- to C-terminus: Protein CLP1 homolog (444 aa).

ATP-binding positions include glutamate 33, lysine 72, and 140–145 (DSGKST).

This sequence belongs to the Clp1 family. Clp1 subfamily. Interacts with PCFS4 and SYM5. Forms a complex with cleavage and polyadenylation specificity factor (CPSF) subunits CPSF30, CPSF100, PCFS1, PCFS4, PCFS5, CPSF160 and FY.

The protein resides in the nucleus. Its function is as follows. Required for endonucleolytic cleavage during polyadenylation-dependent pre-mRNA 3'-end formation. Functions in gametophyte, embryo and postembryotic development. In Arabidopsis thaliana (Mouse-ear cress), this protein is Protein CLP1 homolog (CLPS3).